Here is a 204-residue protein sequence, read N- to C-terminus: Transcriptional regulator GfcR 1 (204 aa).

It belongs to the purine/pyrimidine phosphoribosyltransferase family. GfcR subfamily.

In Methanosarcina barkeri (strain Fusaro / DSM 804), this protein is Transcriptional regulator GfcR 1.